The primary structure comprises 531 residues: Squalene epoxidase 1 (531 aa).

Residues 9 to 29 (ILPLLISSLLISFVAFYGFFV) traverse the membrane as a helical segment. FAD-binding positions include 70-71 (VA), 90-91 (ER), R98, R169, V185, D347, and M360. 2 helical membrane passes run 458–478 (LVCHFFAVAVYGVIRLLIPFP) and 483–503 (IWLGAKLISGASGIIFPIIKA).

This sequence belongs to the squalene monooxygenase family. It depends on FAD as a cofactor. In terms of tissue distribution, expressed in seedlings, leaves, stems, inflorescences, sepals, style and siliques. Expressed in expanded cotyledons, root tips and cortical cells of the root elongation zone, but not in root hair cells. In leaves, expressed in most cells, with a very strong expression in stomata.

Its subcellular location is the membrane. It catalyses the reaction squalene + reduced [NADPH--hemoprotein reductase] + O2 = (S)-2,3-epoxysqualene + oxidized [NADPH--hemoprotein reductase] + H2O + H(+). It functions in the pathway terpene metabolism; lanosterol biosynthesis; lanosterol from farnesyl diphosphate: step 2/3. Its function is as follows. Catalyzes the stereospecific oxidation of squalene to (S)-2,3-epoxysqualene, and is considered to be a rate-limiting enzyme in steroid biosynthesis. Can produce not only oxidosqualene, but also 2,3:22,23-dioxidosqualene. Main squalene epoxidase in the root. Sqe1 mutants may show defects in membrane lipid rafts, impairing the correct localization of RHD2 NADPH oxidase and the proper polarized production of ROS. The chain is Squalene epoxidase 1 (SQE1) from Arabidopsis thaliana (Mouse-ear cress).